Consider the following 327-residue polypeptide: Zinc transport protein ZntB (327 aa).

Over 1–273 (MEGIKGSEVN…SRRTYTMSLM (273 aa)) the chain is Cytoplasmic. The chain crosses the membrane as a helical span at residues 274-294 (AMVFLPSTFLTGLFGVNLGGI). Residues 295-300 (PGGGYQ) are Periplasmic-facing. A helical membrane pass occupies residues 301-321 (FGFSAFCIMLVVLIGGVAWWL). Residues 322-327 (HRSKWL) are Cytoplasmic-facing.

This sequence belongs to the CorA metal ion transporter (MIT) (TC 1.A.35) family.

The protein resides in the cell inner membrane. The enzyme catalyses Zn(2+)(out) + H(+)(out) = Zn(2+)(in) + H(+)(in). Zinc transporter. Acts as a Zn(2+):proton symporter, which likely mediates zinc ion uptake. In Enterobacter sp. (strain 638), this protein is Zinc transport protein ZntB.